Reading from the N-terminus, the 138-residue chain is Basic phospholipase A2 Bs-N6 (138 aa).

Positions 1-16 are cleaved as a signal peptide; the sequence is MRTLWIVAVLLVGVEG. Intrachain disulfides connect Cys-42-Cys-131, Cys-44-Cys-60, Cys-59-Cys-111, Cys-65-Cys-138, Cys-66-Cys-104, Cys-73-Cys-97, and Cys-91-Cys-102. Residues Tyr-43, Gly-45, and Gly-47 each contribute to the Ca(2+) site. The active site involves His-63. Asp-64 contacts Ca(2+). Asp-105 is a catalytic residue.

In terms of assembly, monomer. Requires Ca(2+) as cofactor. Contains 7 disulfide bonds. Expressed by the venom gland.

It is found in the secreted. It carries out the reaction a 1,2-diacyl-sn-glycero-3-phosphocholine + H2O = a 1-acyl-sn-glycero-3-phosphocholine + a fatty acid + H(+). In terms of biological role, snake venom phospholipase A2 (PLA2) that shows myotoxic activities. PLA2 catalyzes the calcium-dependent hydrolysis of the 2-acyl groups in 3-sn-phosphoglycerides. This chain is Basic phospholipase A2 Bs-N6, found in Bothriechis schlegelii (Eyelash palm pitviper).